A 129-amino-acid chain; its full sequence is Ribonuclease P protein component (129 aa).

This sequence belongs to the RnpA family. In terms of assembly, consists of a catalytic RNA component (M1 or rnpB) and a protein subunit.

It carries out the reaction Endonucleolytic cleavage of RNA, removing 5'-extranucleotides from tRNA precursor.. In terms of biological role, RNaseP catalyzes the removal of the 5'-leader sequence from pre-tRNA to produce the mature 5'-terminus. It can also cleave other RNA substrates such as 4.5S RNA. The protein component plays an auxiliary but essential role in vivo by binding to the 5'-leader sequence and broadening the substrate specificity of the ribozyme. The polypeptide is Ribonuclease P protein component (Corynebacterium jeikeium (strain K411)).